Reading from the N-terminus, the 167-residue chain is Ubiquitin-fold modifier-conjugating enzyme 1 (167 aa).

The active-site Glycyl thioester intermediate is cysteine 116.

It belongs to the ubiquitin-conjugating enzyme family. UFC1 subfamily. Interacts with UBA5 (via C-terminus). Interacts with UFL1. Interacts with UFM1.

Functionally, E2-like enzyme which specifically catalyzes the second step in ufmylation. Accepts the ubiquitin-like modifier UFM1 from the E1 enzyme UBA5 and forms an intermediate with UFM1 via a thioester linkage. Ufmylation is involved in various processes, such as ribosome recycling, response to DNA damage, interferon response or reticulophagy (also called ER-phagy). In Osmerus mordax (Rainbow smelt), this protein is Ubiquitin-fold modifier-conjugating enzyme 1.